A 1067-amino-acid polypeptide reads, in one-letter code: Glycine--tRNA ligase, chloroplastic/mitochondrial 2 (1067 aa).

The transit peptide at 1 to 50 (MAILHFSLPLIVSFLRPHASPRFFLLPRSLSQSPFLSRRRFHRTSAVSSA) directs the protein to the chloroplast and mitochondrion. E513 serves as a coordination point for substrate. Residues 589–596 (RNSGINIE), 619–624 (LVVPQN), 744–745 (RL), and 859–862 (GLRR) each bind ATP. Residue 624 to 628 (NLLNE) participates in substrate binding. 855–859 (NDPFG) lines the substrate pocket.

Belongs to the class-II aminoacyl-tRNA synthetase family. In terms of assembly, homodimer.

The protein localises to the plastid. It localises to the chloroplast. The protein resides in the mitochondrion. It catalyses the reaction tRNA(Gly) + glycine + ATP = glycyl-tRNA(Gly) + AMP + diphosphate. Its function is as follows. Catalyzes the attachment of glycine to tRNA(Gly). Is also able produce diadenosine tetraphosphate (Ap4A), a universal pleiotropic signaling molecule needed for cell regulation pathways, by direct condensation of 2 ATPs. In Arabidopsis thaliana (Mouse-ear cress), this protein is Glycine--tRNA ligase, chloroplastic/mitochondrial 2.